Reading from the N-terminus, the 308-residue chain is Ribosomal RNA small subunit methyltransferase H (308 aa).

S-adenosyl-L-methionine is bound by residues 33-35, Asp-52, Tyr-81, Asp-99, and Gln-106; that span reads GGH.

The protein belongs to the methyltransferase superfamily. RsmH family.

The protein resides in the cytoplasm. It carries out the reaction cytidine(1402) in 16S rRNA + S-adenosyl-L-methionine = N(4)-methylcytidine(1402) in 16S rRNA + S-adenosyl-L-homocysteine + H(+). Its function is as follows. Specifically methylates the N4 position of cytidine in position 1402 (C1402) of 16S rRNA. The protein is Ribosomal RNA small subunit methyltransferase H of Francisella philomiragia subsp. philomiragia (strain ATCC 25017 / CCUG 19701 / FSC 153 / O#319-036).